Here is a 491-residue protein sequence, read N- to C-terminus: Proline--tRNA ligase (491 aa).

This sequence belongs to the class-II aminoacyl-tRNA synthetase family. ProS type 3 subfamily. Homodimer.

The protein localises to the cytoplasm. The catalysed reaction is tRNA(Pro) + L-proline + ATP = L-prolyl-tRNA(Pro) + AMP + diphosphate. Catalyzes the attachment of proline to tRNA(Pro) in a two-step reaction: proline is first activated by ATP to form Pro-AMP and then transferred to the acceptor end of tRNA(Pro). The polypeptide is Proline--tRNA ligase (Halorubrum lacusprofundi (strain ATCC 49239 / DSM 5036 / JCM 8891 / ACAM 34)).